A 245-amino-acid polypeptide reads, in one-letter code: Proteolipid protein DM alpha (245 aa).

The next 4 helical transmembrane spans lie at 19-35 (LIAT…FCGC), 71-87 (IIYG…VLLL), 117-133 (FIFL…GVFA), and 204-220 (LFIA…IALL).

The protein belongs to the myelin proteolipid protein family. In terms of tissue distribution, highly expressed in white matter in myelinating shark brain.

Its subcellular location is the membrane. This is Proteolipid protein DM alpha from Squalus acanthias (Spiny dogfish).